The sequence spans 128 residues: Large ribosomal subunit protein bL17 (128 aa).

The protein belongs to the bacterial ribosomal protein bL17 family. Part of the 50S ribosomal subunit. Contacts protein L32.

In Tolumonas auensis (strain DSM 9187 / NBRC 110442 / TA 4), this protein is Large ribosomal subunit protein bL17.